The primary structure comprises 558 residues: Dihydroxy-acid dehydratase (558 aa).

Asp78 is a Mg(2+) binding site. Residue Cys119 participates in [2Fe-2S] cluster binding. Mg(2+)-binding residues include Asp120 and Lys121. An N6-carboxylysine modification is found at Lys121. Cys192 is a [2Fe-2S] cluster binding site. Glu446 serves as a coordination point for Mg(2+). Ser472 acts as the Proton acceptor in catalysis.

Belongs to the IlvD/Edd family. Homodimer. It depends on [2Fe-2S] cluster as a cofactor. Mg(2+) serves as cofactor.

The enzyme catalyses (2R)-2,3-dihydroxy-3-methylbutanoate = 3-methyl-2-oxobutanoate + H2O. The catalysed reaction is (2R,3R)-2,3-dihydroxy-3-methylpentanoate = (S)-3-methyl-2-oxopentanoate + H2O. It functions in the pathway amino-acid biosynthesis; L-isoleucine biosynthesis; L-isoleucine from 2-oxobutanoate: step 3/4. It participates in amino-acid biosynthesis; L-valine biosynthesis; L-valine from pyruvate: step 3/4. Functions in the biosynthesis of branched-chain amino acids. Catalyzes the dehydration of (2R,3R)-2,3-dihydroxy-3-methylpentanoate (2,3-dihydroxy-3-methylvalerate) into 2-oxo-3-methylpentanoate (2-oxo-3-methylvalerate) and of (2R)-2,3-dihydroxy-3-methylbutanoate (2,3-dihydroxyisovalerate) into 2-oxo-3-methylbutanoate (2-oxoisovalerate), the penultimate precursor to L-isoleucine and L-valine, respectively. This Campylobacter lari (strain RM2100 / D67 / ATCC BAA-1060) protein is Dihydroxy-acid dehydratase.